A 505-amino-acid chain; its full sequence is Maturase K (505 aa).

This sequence belongs to the intron maturase 2 family. MatK subfamily.

Its subcellular location is the plastid. The protein localises to the chloroplast. In terms of biological role, usually encoded in the trnK tRNA gene intron. Probably assists in splicing its own and other chloroplast group II introns. The chain is Maturase K from Idiospermum australiense (Ribbonwood tree).